Consider the following 249-residue polypeptide: Coproheme decarboxylase (249 aa).

Fe-coproporphyrin III is bound by residues Arg-131, 145-149 (YPMDK), His-172, Gln-185, and Ser-223. Tyr-145 is a catalytic residue.

It belongs to the ChdC family. Type 1 subfamily. Requires Fe-coproporphyrin III as cofactor.

It carries out the reaction Fe-coproporphyrin III + 2 H2O2 + 2 H(+) = heme b + 2 CO2 + 4 H2O. It catalyses the reaction Fe-coproporphyrin III + H2O2 + H(+) = harderoheme III + CO2 + 2 H2O. The enzyme catalyses harderoheme III + H2O2 + H(+) = heme b + CO2 + 2 H2O. It participates in porphyrin-containing compound metabolism; protoheme biosynthesis. Its function is as follows. Involved in coproporphyrin-dependent heme b biosynthesis. Catalyzes the decarboxylation of Fe-coproporphyrin III (coproheme) to heme b (protoheme IX), the last step of the pathway. The reaction occurs in a stepwise manner with a three-propionate intermediate. This chain is Coproheme decarboxylase, found in Shouchella clausii (strain KSM-K16) (Alkalihalobacillus clausii).